We begin with the raw amino-acid sequence, 131 residues long: Acyl carrier protein 3, mitochondrial (131 aa).

Residues 1-39 (MHCIRSSILQHLRLRVSVRPTSLLQNENGFKSIGIFNFT) constitute a mitochondrion transit peptide. A Carrier domain is found at 49-124 (DQILSRVIEL…DVATYILSET (76 aa)). O-(pantetheine 4'-phosphoryl)serine is present on Ser84.

Belongs to the acyl carrier protein (ACP) family. As to quaternary structure, complex I is composed of at least 49 different subunits. Post-translationally, 4'-phosphopantetheine is transferred from CoA to a specific serine of the apo-ACP-like protein.

The protein localises to the mitochondrion. It participates in lipid metabolism; fatty acid biosynthesis. Carrier of the growing fatty acid chain in fatty acid biosynthesis. May be involved in the synthesis of short and medium chain fatty acids. Accessory and non-catalytic subunit of the mitochondrial membrane respiratory chain NADH dehydrogenase (Complex I), which functions in the transfer of electrons from NADH to the respiratory chain. In Arabidopsis thaliana (Mouse-ear cress), this protein is Acyl carrier protein 3, mitochondrial (MTACP2).